We begin with the raw amino-acid sequence, 167 residues long: Small ribosomal subunit protein uS5 (167 aa).

Positions 11–74 constitute an S5 DRBM domain; that stretch reads LQEKLIAVNR…EKARRNMINV (64 aa).

This sequence belongs to the universal ribosomal protein uS5 family. In terms of assembly, part of the 30S ribosomal subunit. Contacts proteins S4 and S8.

In terms of biological role, with S4 and S12 plays an important role in translational accuracy. Its function is as follows. Located at the back of the 30S subunit body where it stabilizes the conformation of the head with respect to the body. This Shigella dysenteriae serotype 1 (strain Sd197) protein is Small ribosomal subunit protein uS5.